The chain runs to 151 residues: Aspartate carbamoyltransferase regulatory chain (151 aa).

Residues Cys108, Cys113, Cys138, and Cys141 each coordinate Zn(2+).

Belongs to the PyrI family. Contains catalytic and regulatory chains. Zn(2+) is required as a cofactor.

In terms of biological role, involved in allosteric regulation of aspartate carbamoyltransferase. The polypeptide is Aspartate carbamoyltransferase regulatory chain (Pyrobaculum neutrophilum (strain DSM 2338 / JCM 9278 / NBRC 100436 / V24Sta) (Thermoproteus neutrophilus)).